We begin with the raw amino-acid sequence, 464 residues long: tRNA-2-methylthio-N(6)-dimethylallyladenosine synthase (464 aa).

Residues M1 to P25 form a disordered region. The region spanning R27–G142 is the MTTase N-terminal domain. The [4Fe-4S] cluster site is built by C36, C72, C105, C180, C184, and C187. The region spanning A166–E398 is the Radical SAM core domain. Positions A401–A464 constitute a TRAM domain.

It belongs to the methylthiotransferase family. MiaB subfamily. In terms of assembly, monomer. The cofactor is [4Fe-4S] cluster.

It localises to the cytoplasm. The catalysed reaction is N(6)-dimethylallyladenosine(37) in tRNA + (sulfur carrier)-SH + AH2 + 2 S-adenosyl-L-methionine = 2-methylsulfanyl-N(6)-dimethylallyladenosine(37) in tRNA + (sulfur carrier)-H + 5'-deoxyadenosine + L-methionine + A + S-adenosyl-L-homocysteine + 2 H(+). In terms of biological role, catalyzes the methylthiolation of N6-(dimethylallyl)adenosine (i(6)A), leading to the formation of 2-methylthio-N6-(dimethylallyl)adenosine (ms(2)i(6)A) at position 37 in tRNAs that read codons beginning with uridine. The chain is tRNA-2-methylthio-N(6)-dimethylallyladenosine synthase from Anaeromyxobacter dehalogenans (strain 2CP-C).